Here is a 335-residue protein sequence, read N- to C-terminus: Biotin synthase (335 aa).

The 229-residue stretch at 46 to 274 (YNIQLASLFS…KSKIRLSAGR (229 aa)) folds into the Radical SAM core domain. [4Fe-4S] cluster is bound by residues Cys-61, Cys-65, and Cys-68. Cys-105, Cys-137, Cys-197, and Arg-269 together coordinate [2Fe-2S] cluster.

Belongs to the radical SAM superfamily. Biotin synthase family. As to quaternary structure, homodimer. [4Fe-4S] cluster serves as cofactor. The cofactor is [2Fe-2S] cluster.

It catalyses the reaction (4R,5S)-dethiobiotin + (sulfur carrier)-SH + 2 reduced [2Fe-2S]-[ferredoxin] + 2 S-adenosyl-L-methionine = (sulfur carrier)-H + biotin + 2 5'-deoxyadenosine + 2 L-methionine + 2 oxidized [2Fe-2S]-[ferredoxin]. The protein operates within cofactor biosynthesis; biotin biosynthesis; biotin from 7,8-diaminononanoate: step 2/2. Catalyzes the conversion of dethiobiotin (DTB) to biotin by the insertion of a sulfur atom into dethiobiotin via a radical-based mechanism. In Prochlorococcus marinus (strain MIT 9312), this protein is Biotin synthase.